A 146-amino-acid chain; its full sequence is U1 small nuclear ribonucleoprotein C (146 aa).

The Matrin-type zinc finger occupies 4–36 (YYCDYCDTYLTHDSPSVRKTHCTGRKHRDNVKF). The tract at residues 64–96 (NNPFAGGPSSAPPKPSGVSIPPPNMGAPPRPGM) is disordered. Positions 73 to 96 (SAPPKPSGVSIPPPNMGAPPRPGM) are enriched in pro residues.

It belongs to the U1 small nuclear ribonucleoprotein C family. U1 snRNP is composed of the 7 core Sm proteins B/B', D1, D2, D3, E, F and G that assemble in a heptameric protein ring on the Sm site of the small nuclear RNA to form the core snRNP, and at least 3 U1 snRNP-specific proteins U1-70K, U1-A and U1-C. U1-C interacts with U1 snRNA and the 5' splice-site region of the pre-mRNA.

Its subcellular location is the nucleus. Its function is as follows. Component of the spliceosomal U1 snRNP, which is essential for recognition of the pre-mRNA 5' splice-site and the subsequent assembly of the spliceosome. U1-C is directly involved in initial 5' splice-site recognition for both constitutive and regulated alternative splicing. The interaction with the 5' splice-site seems to precede base-pairing between the pre-mRNA and the U1 snRNA. Stimulates commitment or early (E) complex formation by stabilizing the base pairing of the 5' end of the U1 snRNA and the 5' splice-site region. The chain is U1 small nuclear ribonucleoprotein C from Drosophila pseudoobscura pseudoobscura (Fruit fly).